The chain runs to 75 residues: Large ribosomal subunit protein bL31 (75 aa).

The protein belongs to the bacterial ribosomal protein bL31 family. Type A subfamily. In terms of assembly, part of the 50S ribosomal subunit.

Functionally, binds the 23S rRNA. In Bradyrhizobium diazoefficiens (strain JCM 10833 / BCRC 13528 / IAM 13628 / NBRC 14792 / USDA 110), this protein is Large ribosomal subunit protein bL31.